A 162-amino-acid chain; its full sequence is Interleukin-15 (162 aa).

Residues 1–29 (MRISKPHLRSISIQCYLCLLLKSHFLTEA) form the signal peptide. A propeptide spanning residues 30-48 (GIHVFILGCFSAGLPKTEA) is cleaved from the precursor. 2 disulfide bridges follow: C83-C133 and C90-C136. N-linked (GlcNAc...) asparagine glycosylation occurs at N127.

The protein belongs to the IL-15/IL-21 family.

Its subcellular location is the secreted. Cytokine that plays a major role in the development of inflammatory and protective immune responses to microbial invaders and parasites by modulating immune cells of both the innate and adaptive immune systems. Stimulates the proliferation of natural killer cells, T-cells and B-cells and promotes the secretion of several cytokines. In monocytes, induces the production of IL8 and monocyte chemotactic protein 1/CCL2, two chemokines that attract neutrophils and monocytes respectively to sites of infection. Unlike most cytokines, which are secreted in soluble form, IL15 is expressed in association with its high affinity IL15RA on the surface of IL15-producing cells and delivers signals to target cells that express IL2RB and IL2RG receptor subunits. Binding to its receptor triggers the phosphorylation of JAK1 and JAK3 and the recruitment and subsequent phosphorylation of signal transducer and activator of transcription-3/STAT3 and STAT5. In mast cells, induces the rapid tyrosine phosphorylation of STAT6 and thereby controls mast cell survival and release of cytokines such as IL4. The polypeptide is Interleukin-15 (IL15) (Chlorocebus aethiops (Green monkey)).